We begin with the raw amino-acid sequence, 509 residues long: FAD-linked oxidoreductase dpmaF (509 aa).

A signal peptide spans 1 to 21 (MTRLSLQLIAGLAGQAWLVNS). Residues 59 to 231 (LQYEPIAVAV…AEYGFETFPA (173 aa)) form the FAD-binding PCMH-type domain. N-linked (GlcNAc...) asparagine glycosylation is found at Asn-125, Asn-193, and Asn-281.

The protein belongs to the oxygen-dependent FAD-linked oxidoreductase family. It depends on FAD as a cofactor.

Its pathway is secondary metabolite biosynthesis; terpenoid biosynthesis. Functionally, FAD-linked oxidoreductase; part of the gene cluster that mediates the biosynthesis of the diterpenoid pyrones subglutinols A and B. The first step of the pathway is the synthesis of the alpha-pyrone moiety by the polyketide synthase dpmaA via condensation of one acetyl-CoA starter unit with 3 malonyl-CoA units and 2 methylations. The alpha-pyrone is then combined with geranylgeranyl pyrophosphate (GGPP) formed by the GGPP synthase dpmaD through the action of the prenyltransferase dpmaC to yield a linear alpha-pyrone diterpenoid. Subsequent steps in the diterpenoid pyrone biosynthetic pathway involve the decalin core formation, which is initiated by the epoxidation of the C10-C11 olefin by the FAD-dependent oxidoreductase dpmaE, and is followed by a cyclization cascade catalyzed by the terpene cyclase dpmaB. The dehydrogenase dpmaF is then involved in tetrahydrofuran (THF) ring formation at the C5 unit to complete the formation of subglutinols A and B. This chain is FAD-linked oxidoreductase dpmaF, found in Metarhizium anisopliae (Entomophthora anisopliae).